The chain runs to 123 residues: CD59A glycoprotein (123 aa).

An N-terminal signal peptide occupies residues 1–23 (MRAQRGLILLLLLLAVFCSTAVS). The UPAR/Ly6 domain maps to 24 to 96 (LTCYHCFQPV…CCQFNLCNKS (73 aa)). 5 cysteine pairs are disulfide-bonded: cysteine 26-cysteine 50, cysteine 29-cysteine 37, cysteine 43-cysteine 63, cysteine 69-cysteine 87, and cysteine 88-cysteine 93. Asparagine 40 carries N-linked (GlcNAc...) asparagine glycosylation. N-linked (GlcNAc...) asparagine glycosylation is present at asparagine 94. The propeptide at 97–123 (DGSLGKTPLLGTSVLVAILNLCFLSHL) is removed in mature form.

Interacts with T-cell surface antigen CD2. Post-translationally, N- and O-glycosylated. Expressed in all tissues examined (liver, kidney, spleen, thymus, brain and heart). Low levels in thymus. Also expressed in mononuclear cells, erythrocytes and platelets. Barely detected in neutrophils.

The protein resides in the cell membrane. Its subcellular location is the secreted. Potent inhibitor of the complement membrane attack complex (MAC) action, which protects self-cells from damage during complement activation. Acts by binding to the beta-haipins of C8 (C8A and C8B) components of the assembling MAC, forming an intermolecular beta-sheet that prevents incorporation of the multiple copies of C9 required for complete formation of the osmolytic pore. This is CD59A glycoprotein from Mus musculus (Mouse).